A 146-amino-acid polypeptide reads, in one-letter code: Ribosome-binding factor A (146 aa).

The tract at residues K121 to A146 is disordered. A compositionally biased stretch (acidic residues) spans D130 to A146.

It belongs to the RbfA family. In terms of assembly, monomer. Binds 30S ribosomal subunits, but not 50S ribosomal subunits or 70S ribosomes.

The protein localises to the cytoplasm. Its function is as follows. One of several proteins that assist in the late maturation steps of the functional core of the 30S ribosomal subunit. Associates with free 30S ribosomal subunits (but not with 30S subunits that are part of 70S ribosomes or polysomes). Required for efficient processing of 16S rRNA. May interact with the 5'-terminal helix region of 16S rRNA. The polypeptide is Ribosome-binding factor A (Shewanella sp. (strain MR-4)).